The sequence spans 344 residues: N-acetyl-gamma-glutamyl-phosphate reductase (344 aa).

Cysteine 150 is an active-site residue.

Belongs to the NAGSA dehydrogenase family. Type 1 subfamily.

Its subcellular location is the cytoplasm. It carries out the reaction N-acetyl-L-glutamate 5-semialdehyde + phosphate + NADP(+) = N-acetyl-L-glutamyl 5-phosphate + NADPH + H(+). It functions in the pathway amino-acid biosynthesis; L-arginine biosynthesis; N(2)-acetyl-L-ornithine from L-glutamate: step 3/4. Its function is as follows. Catalyzes the NADPH-dependent reduction of N-acetyl-5-glutamyl phosphate to yield N-acetyl-L-glutamate 5-semialdehyde. This chain is N-acetyl-gamma-glutamyl-phosphate reductase, found in Ectopseudomonas mendocina (strain ymp) (Pseudomonas mendocina).